The primary structure comprises 604 residues: Vacuolar protein sorting-associated protein 64 (604 aa).

Residues 1-89 are disordered; the sequence is MVELEKRRRP…SVHQVSQQQQ (89 aa). Residues 1 to 578 are Cytoplasmic-facing; the sequence is MVELEKRRRP…LGVVEGKRTR (578 aa). A compositionally biased stretch (polar residues) spans 22 to 34; sequence DQSNSQGMTKTPE. Low complexity-rich tracts occupy residues 44-57 and 77-89; these read RARS…SRSN and SPPS…QQQQ. The 73-residue stretch at 185–257 folds into the FHA domain; that stretch reads LKLGRPVTNS…NGTFVNGVKI (73 aa). Residues 404 to 563 adopt a coiled-coil conformation; it reads NLINMIKTLT…EEKKDTEDTL (160 aa). The tract at residues 539 to 561 is disordered; sequence INNDNNAKVKQNDSREEKKDTED. Positions 548 to 560 are enriched in basic and acidic residues; it reads KQNDSREEKKDTE. Residues 579-598 traverse the membrane as a helical; Anchor for type IV membrane protein segment; the sequence is VSKGMLFGVVAISFGLVATA. The Lumenal segment spans residues 599-604; it reads VKQLPQ.

Component of a complex at least composed of FAR3, FAR7, FAR8, FAR10, FAR11 and VPS64.

The protein localises to the endoplasmic reticulum membrane. In terms of biological role, participates in the control of the reentry into the cell cycle following pheromone treatment. Involved in vacuolar protein sorting. The polypeptide is Vacuolar protein sorting-associated protein 64 (VPS64) (Saccharomyces cerevisiae (strain ATCC 204508 / S288c) (Baker's yeast)).